Here is a 490-residue protein sequence, read N- to C-terminus: Adenylosuccinate lyase (490 aa).

A2 is subject to N-acetylalanine. Substrate contacts are provided by residues 26–27, 91–93, and 117–118; these read RY, RHD, and TS. K153 bears the N6-acetyllysine mark. H165 serves as the catalytic Proton donor/acceptor. Q247 serves as a coordination point for substrate. Residue S295 is the Proton donor/acceptor of the active site. K301 is modified (N6-acetyllysine). Substrate is bound by residues R309, R335, S340, and R344. A Glycyl lysine isopeptide (Lys-Gly) (interchain with G-Cter in SUMO1) cross-link involves residue K421.

This sequence belongs to the lyase 1 family. Adenylosuccinate lyase subfamily. In terms of assembly, homotetramer. Residues from neighboring subunits contribute catalytic and substrate-binding residues to each active site.

It carries out the reaction N(6)-(1,2-dicarboxyethyl)-AMP = fumarate + AMP. It catalyses the reaction (2S)-2-[5-amino-1-(5-phospho-beta-D-ribosyl)imidazole-4-carboxamido]succinate = 5-amino-1-(5-phospho-beta-D-ribosyl)imidazole-4-carboxamide + fumarate. The protein operates within purine metabolism; AMP biosynthesis via de novo pathway; AMP from IMP: step 2/2. It participates in purine metabolism; IMP biosynthesis via de novo pathway; 5-amino-1-(5-phospho-D-ribosyl)imidazole-4-carboxamide from 5-amino-1-(5-phospho-D-ribosyl)imidazole-4-carboxylate: step 2/2. Its function is as follows. Catalyzes two non-sequential steps in de novo AMP synthesis: converts (S)-2-(5-amino-1-(5-phospho-D-ribosyl)imidazole-4-carboxamido)succinate (SAICAR) to fumarate plus 5-amino-1-(5-phospho-D-ribosyl)imidazole-4-carboxamide, and thereby also contributes to de novo IMP synthesis, and converts succinyladenosine monophosphate (SAMP) to AMP and fumarate. In Bos taurus (Bovine), this protein is Adenylosuccinate lyase (ADSL).